Consider the following 185-residue polypeptide: Pap fimbrial major pilin protein (185 aa).

Positions 1–22 are cleaved as a signal peptide; that stretch reads MIKSVIAGAVAMAVVSFGVNNA. Cysteine 44 and cysteine 83 are oxidised to a cystine.

This sequence belongs to the fimbrial protein family.

The protein localises to the secreted. The protein resides in the fimbrium. In terms of biological role, polymerizes to form the thick (6.8 nm in diameter) rod of the pilus (also called fimbria). The rod is a right-handed helical cylinder with 3.28 PapA subunits per turn. Pili are polar filaments radiating from the surface of the bacterium to a length of 0.5-1.5 micrometers and numbering 100-300 per cell, and enable bacteria to colonize the epithelium of specific host organs. The protein is Pap fimbrial major pilin protein (papA) of Escherichia coli.